A 247-amino-acid chain; its full sequence is NCT transcriptional regulatory complex subunit A (247 aa).

A compositionally biased stretch (basic and acidic residues) spans 1–12 (MTDQDSTYRPRS). 3 disordered regions span residues 1-31 (MTDQ…SPIY), 48-82 (FFAP…SPDM), and 212-247 (VPDQ…DDSD). Residues 13 to 22 (PDLSTFQSSI) are compositionally biased toward polar residues.

This sequence belongs to the NC2 alpha/DRAP1 family. As to quaternary structure, forms the NCT transcriptional regulatory complex with nctB and mot1.

Its subcellular location is the nucleus. In terms of biological role, part of the NCT transcriptional regulatory complex that acts as a key regulator of ergosterol biosynthesis and the azole exporter cdr1B. The NCT complex binds the promoters of genes linked to azole susceptibility, and especially represses the expression of cdr1B transporter. In Aspergillus fumigatus (strain CBS 144.89 / FGSC A1163 / CEA10) (Neosartorya fumigata), this protein is NCT transcriptional regulatory complex subunit A.